The following is a 1522-amino-acid chain: ATP-binding cassette sub-family C member 3 (1522 aa).

The Extracellular segment spans residues Met-1 to Phe-32. N-linked (GlcNAc...) asparagine glycosylation occurs at Asn-18. Residues Gln-33 to Leu-53 form a helical membrane-spanning segment. Residues Phe-54–Lys-73 lie on the Cytoplasmic side of the membrane. Residues Thr-74–Gly-94 traverse the membrane as a helical segment. Residues Leu-95 to Ser-99 are Extracellular-facing. Residues Ser-100–Thr-120 traverse the membrane as a helical segment. The Cytoplasmic segment spans residues Leu-121 to Arg-132. A helical transmembrane segment spans residues Ser-133–Arg-153. At Ser-154–Phe-171 the chain is on the extracellular side. A helical membrane pass occupies residues Thr-172 to Glu-192. At Lys-193–Ala-301 the chain is on the cytoplasmic side. The chain crosses the membrane as a helical span at residues Leu-302–Leu-322. Positions Leu-310–Gln-592 constitute an ABC transmembrane type-1 1 domain. The Extracellular portion of the chain corresponds to Ser-323 to Gly-347. Residues Phe-348–His-368 form a helical membrane-spanning segment. Topologically, residues Tyr-369–Phe-424 are cytoplasmic. The helical transmembrane segment at Ile-425–Ile-445 threads the bilayer. Over Leu-446 to Pro-448 the chain is Extracellular. Residues Ser-449–Met-469 form a helical membrane-spanning segment. Residues Lys-470–Ala-531 are Cytoplasmic-facing. The helical transmembrane segment at Ile-532–Tyr-552 threads the bilayer. Residues Val-553–Asn-574 are Extracellular-facing. Residues Ile-575–Val-595 traverse the membrane as a helical segment. Residues Ser-596–Ala-958 are Cytoplasmic-facing. The ABC transporter 1 domain maps to Ile-625–Asn-849. Gly-659–Ser-666 is an ATP binding site. Ser-902 and Ser-905 each carry phosphoserine. A helical membrane pass occupies residues Lys-959 to Val-979. The region spanning Thr-966–Ser-1247 is the ABC transmembrane type-1 2 domain. The Extracellular segment spans residues Ala-980 to Leu-1016. N-linked (GlcNAc...) asparagine glycans are attached at residues Asn-1001 and Asn-1002. Residues Gln-1017–Arg-1037 traverse the membrane as a helical segment. Residues Leu-1038–Pro-1080 lie on the Cytoplasmic side of the membrane. A helical membrane pass occupies residues Thr-1081 to Ala-1101. Position 1102 (Ser-1102) is a topological domain, extracellular. Residues Thr-1103–Phe-1123 traverse the membrane as a helical segment. Topologically, residues Tyr-1124–Val-1194 are cytoplasmic. The chain crosses the membrane as a helical span at residues Glu-1195–Ser-1215. At Leu-1216–Asn-1217 the chain is on the extracellular side. A helical membrane pass occupies residues Pro-1218 to Met-1238. At Ile-1239 to Ala-1522 the chain is on the cytoplasmic side. Residues Phe-1286–Asp-1518 form the ABC transporter 2 domain. Gly-1318–Ser-1325 is a binding site for ATP.

It belongs to the ABC transporter superfamily. ABCC family. Conjugate transporter (TC 3.A.1.208) subfamily. Expressed in lung, ileum, colon and liver. Higher in liver of Eisai hyperbilirubinemic rats.

Its subcellular location is the basolateral cell membrane. It localises to the basal cell membrane. It carries out the reaction an S-substituted glutathione(in) + ATP + H2O = an S-substituted glutathione(out) + ADP + phosphate + H(+). It catalyses the reaction ATP + H2O + xenobioticSide 1 = ADP + phosphate + xenobioticSide 2.. The catalysed reaction is taurocholate(in) + ATP + H2O = taurocholate(out) + ADP + phosphate + H(+). The enzyme catalyses glycocholate(in) + ATP + H2O = glycocholate(out) + ADP + phosphate + H(+). It carries out the reaction taurolithocholate 3-sulfate(in) + ATP + H2O = taurolithocholate 3-sulfate(out) + ADP + phosphate + H(+). It catalyses the reaction 17beta-estradiol 17-O-(beta-D-glucuronate)(in) + ATP + H2O = 17beta-estradiol 17-O-(beta-D-glucuronate)(out) + ADP + phosphate + H(+). The catalysed reaction is dehydroepiandrosterone 3-sulfate(in) + ATP + H2O = dehydroepiandrosterone 3-sulfate(out) + ADP + phosphate + H(+). The enzyme catalyses leukotriene C4(in) + ATP + H2O = leukotriene C4(out) + ADP + phosphate + H(+). It carries out the reaction (4Z,15Z)-bilirubin IXalpha C8-beta-D-glucuronoside(in) + ATP + H2O = (4Z,15Z)-bilirubin IXalpha C8-beta-D-glucuronoside(out) + ADP + phosphate + H(+). It catalyses the reaction (4Z,15Z)-bilirubin IXalpha C8,C12-beta-D-bisglucuronoside(in) + ATP + H2O = (4Z,15Z)-bilirubin IXalpha C8,C12-beta-D-bisglucuronoside(out) + ADP + phosphate + H(+). The catalysed reaction is taurochenodeoxycholate 3-sulfate(in) + ATP + H2O = taurochenodeoxycholate 3-sulfate(out) + ADP + phosphate + H(+). In terms of biological role, ATP-dependent transporter of the ATP-binding cassette (ABC) family that binds and hydrolyzes ATP to enable active transport of various substrates including many drugs, toxicants and endogenous compound across cell membranes. Transports glucuronide conjugates such as bilirubin diglucuronide, estradiol-17-beta-o-glucuronide and GSH conjugates such as leukotriene C4 (LTC4). Transports also various bile salts (taurocholate, glycocholate, taurochenodeoxycholate-3-sulfate, taurolithocholate- 3-sulfate). Does not contribute substantially to bile salt physiology but provides an alternative route for the export of bile acids and glucuronides from cholestatic hepatocytes. May contribute to regulate the transport of organic compounds in testes across the blood-testis-barrier. This is ATP-binding cassette sub-family C member 3 (Abcc3) from Rattus norvegicus (Rat).